Reading from the N-terminus, the 1820-residue chain is uncharacterized protein (1820 aa).

Disordered stretches follow at residues 1–73 (MQWT…TLSG), 86–158 (TTTT…VRSA), 226–260 (GSSGPSSLVNSPALGRRKRYTSNSSNCSSQFNNNY), 286–366 (EERA…QETE), 453–497 (DVQD…RNLS), 519–548 (LSSISNKAPGGVPTESGVVTRPDSSDTDTA), 577–597 (GNSSTTTTTTSELGVPRPPTP), 619–689 (GAGT…TASG), and 735–830 (HSHN…TPSS). The span at 20–31 (NRNSIEQRTPAN) shows a compositional bias: polar residues. Low complexity predominate over residues 86-128 (TTTTTIIESSSSTNTTLEKNSPSPAGGSCSSGSGSLSPAYLQH). The segment covering 129 to 146 (HLQHHGSPLHHLQVHHHT) has biased composition (basic residues). Positions 247 to 259 (SNSSNCSSQFNNN) are enriched in low complexity. The stretch at 265-308 (VDSLDDMLRKLTELEQRVIEAEERAEEAEDKVRAMEQRLSEWPK) forms a coiled coil. A compositionally biased stretch (basic and acidic residues) spans 294–305 (DKVRAMEQRLSE). Residues 346–358 (ASGGATAGAAGSG) are compositionally biased toward low complexity. The stretch at 362–438 (TQETEKTITS…LKNHIANQSQ (77 aa)) forms a coiled coil. The segment covering 453 to 463 (DVQDFTGSGSN) has biased composition (polar residues). Phosphoserine is present on residues S542 and S543. The span at 623 to 632 (GTSTAESTAS) shows a compositional bias: low complexity. Over residues 655 to 669 (HGSGTGIGTGDGHGT) the composition is skewed to gly residues. Positions 738 to 769 (NSSSTDNTETSTSGSASSPSKSLKTSSSLSPA) are enriched in low complexity. The span at 787-818 (QSRTSTTPSSRINQHLQPSQHQHHTLSNQNHG) shows a compositional bias: polar residues. PH domains follow at residues 909 to 1003 (SLEK…NVQR) and 1017 to 1124 (KPTV…VVSG). Phosphoserine occurs at positions 1073, 1075, and 1077. A MyTH4 domain is found at 1159–1378 (HTKDTITAPL…PSRMEVLSIL (220 aa)). Positions 1389–1712 (HAIPVHMMNS…DYMNALGHTV (324 aa)) constitute an FERM domain. Disordered regions lie at residues 1713–1748 (PGTPQMNSLTRNGSHRSLRTSQRPNLGGGSAVATGF) and 1764–1820 (ATHT…QRIK). The segment covering 1714–1724 (GTPQMNSLTRN) has biased composition (polar residues). Residues 1764–1781 (ATHTLNSNHSHTLSSSHH) show a composition bias toward low complexity. The segment covering 1805–1820 (HQPDILKSTPDHQRIK) has biased composition (basic and acidic residues).

This is an uncharacterized protein from Drosophila melanogaster (Fruit fly).